A 65-amino-acid polypeptide reads, in one-letter code: MAARCAVCGKGPQTGYTVSHSHIRNKRRFLPNLQPVRTTVDGQNVRLRVCTKCLKAGKVQRVKVA.

This sequence belongs to the bacterial ribosomal protein bL28 family.

The polypeptide is Large ribosomal subunit protein bL28 (Bifidobacterium animalis subsp. lactis (strain AD011)).